The following is a 509-amino-acid chain: Maturase K (509 aa).

This sequence belongs to the intron maturase 2 family. MatK subfamily.

The protein resides in the plastid. It is found in the chloroplast. In terms of biological role, usually encoded in the trnK tRNA gene intron. Probably assists in splicing its own and other chloroplast group II introns. This is Maturase K from Nicotiana paniculata.